The sequence spans 822 residues: Molybdenum cofactor sulfurase (822 aa).

Lysine 239 is modified (N6-(pyridoxal phosphate)lysine). The active site involves cysteine 401. The disordered stretch occupies residues 633 to 666 (TRISNPTRSSRRSQRALMPGSFPEDPSPTSEQPP). Residues 643 to 820 (RRSQRALMPG…VMVGDVVTPQ (178 aa)) enclose the MOSC domain.

This sequence belongs to the class-V pyridoxal-phosphate-dependent aminotransferase family. MOCOS subfamily. Pyridoxal 5'-phosphate is required as a cofactor.

It catalyses the reaction Mo-molybdopterin + L-cysteine + AH2 = thio-Mo-molybdopterin + L-alanine + A + H2O. It participates in cofactor biosynthesis; molybdopterin biosynthesis. In terms of biological role, sulfurates the molybdenum cofactor. Sulfation of molybdenum is essential for xanthine dehydrogenase (XDH) and aldehyde oxidase (ADO) enzymes in which molybdenum cofactor is liganded by 1 oxygen and 1 sulfur atom in active form. The chain is Molybdenum cofactor sulfurase from Aspergillus oryzae (strain ATCC 42149 / RIB 40) (Yellow koji mold).